The following is a 317-amino-acid chain: 3-oxoacyl-[acyl-carrier-protein] reductase 5, chloroplastic (317 aa).

Residues Thr-1 to Gln-57 constitute a chloroplast transit peptide. An NADP(+)-binding site is contributed by Val-79 to Val-103. Ser-211 is a substrate binding site. Tyr-224 (proton acceptor) is an active-site residue.

It belongs to the short-chain dehydrogenases/reductases (SDR) family. Homotetramer.

The protein localises to the plastid. The protein resides in the chloroplast. It catalyses the reaction a (3R)-hydroxyacyl-[ACP] + NADP(+) = a 3-oxoacyl-[ACP] + NADPH + H(+). It participates in lipid metabolism; fatty acid biosynthesis. The polypeptide is 3-oxoacyl-[acyl-carrier-protein] reductase 5, chloroplastic (bkr1) (Brassica napus (Rape)).